The primary structure comprises 260 residues: Hydroxypyruvate/pyruvate aldolase Bphyt_0320 (260 aa).

Residue His-48 is the Proton acceptor of the active site. A divalent metal cation is bound by residues Glu-157 and Asp-183.

This sequence belongs to the HpcH/HpaI aldolase family. The cofactor is Mn(2+). Mg(2+) is required as a cofactor. Requires Co(2+) as cofactor.

It catalyses the reaction D-glyceraldehyde + 3-hydroxypyruvate = 2-dehydro-D-gluconate. It carries out the reaction D-glyceraldehyde + pyruvate = 2-dehydro-3-deoxy-L-galactonate. The catalysed reaction is 2-dehydro-3-deoxy-D-gluconate = D-glyceraldehyde + pyruvate. In terms of biological role, aldolase which can catalyze in vitro the aldolisation reaction between hydroxypyruvate (HPA) or pyruvate (PA) and D-glyceraldehyde (D-GA). The condensation of hydroxypyruvate and D-glyceraldehyde produces 2-dehydro-D-gluconate. The condensation of pyruvate and D-glyceraldehyde produces 2-dehydro-3-deoxy-L-galactonate as the major product and 2-dehydro-3-deoxy-D-gluconate. Also catalyzes the retro-aldol type decarboxylation of oxaloacetate, a general property of known pyruvate aldolases. In Paraburkholderia phytofirmans (strain DSM 17436 / LMG 22146 / PsJN) (Burkholderia phytofirmans), this protein is Hydroxypyruvate/pyruvate aldolase Bphyt_0320.